The following is a 572-amino-acid chain: Sulfite reductase [NADPH] hemoprotein beta-component (572 aa).

[4Fe-4S] cluster contacts are provided by cysteine 437, cysteine 443, cysteine 482, and cysteine 486. A siroheme-binding site is contributed by cysteine 486.

It belongs to the nitrite and sulfite reductase 4Fe-4S domain family. Alpha(8)-beta(8). The alpha component is a flavoprotein, the beta component is a hemoprotein. Siroheme is required as a cofactor. Requires [4Fe-4S] cluster as cofactor.

The enzyme catalyses hydrogen sulfide + 3 NADP(+) + 3 H2O = sulfite + 3 NADPH + 4 H(+). It participates in sulfur metabolism; hydrogen sulfide biosynthesis; hydrogen sulfide from sulfite (NADPH route): step 1/1. In terms of biological role, component of the sulfite reductase complex that catalyzes the 6-electron reduction of sulfite to sulfide. This is one of several activities required for the biosynthesis of L-cysteine from sulfate. The protein is Sulfite reductase [NADPH] hemoprotein beta-component of Staphylococcus epidermidis (strain ATCC 12228 / FDA PCI 1200).